The primary structure comprises 96 residues: Large ribosomal subunit protein uL23 (96 aa).

It belongs to the universal ribosomal protein uL23 family. As to quaternary structure, part of the 50S ribosomal subunit. Contacts protein L29, and trigger factor when it is bound to the ribosome.

In terms of biological role, one of the early assembly proteins it binds 23S rRNA. One of the proteins that surrounds the polypeptide exit tunnel on the outside of the ribosome. Forms the main docking site for trigger factor binding to the ribosome. The polypeptide is Large ribosomal subunit protein uL23 (Caldicellulosiruptor bescii (strain ATCC BAA-1888 / DSM 6725 / KCTC 15123 / Z-1320) (Anaerocellum thermophilum)).